The following is a 296-amino-acid chain: MFKSGFITIVGRPNVGKSTLTNLLMGEKLSIVSNKPQTTRNNIQTILTGDDYQMIFVDTPGIHKPKHKLGEYMVNSATDSIKDVDLVLFLSNPCEEVGRGDKFIVEQLKNQKAPVIFVLNKVDESSPEKVAKTLELFSKEYDFAEMIPISAMKAKNTDKLLELMVKYLPEGPKYYPDDMITDVQERFVVAEIVREKALKNLSQEVPHGIAVDVIQMKQDDNGKYNIEVDLICEKASHKGIIIGKNGQTLKKIGSTARYELERFLRAKVNIKIWVKVRKEWRDNTSLLKELGYKKLK.

The Era-type G domain maps to 3–170 (KSGFITIVGR…LELMVKYLPE (168 aa)). The interval 11-18 (GRPNVGKS) is G1. 11-18 (GRPNVGKS) serves as a coordination point for GTP. A G2 region spans residues 37 to 41 (QTTRN). Residues 58–61 (DTPG) are G3. Residues 58–62 (DTPGI) and 120–123 (NKVD) each bind GTP. A G4 region spans residues 120–123 (NKVD). The interval 149 to 151 (ISA) is G5. Residues 201–278 (LSQEVPHGIA…NIKIWVKVRK (78 aa)) form the KH type-2 domain.

This sequence belongs to the TRAFAC class TrmE-Era-EngA-EngB-Septin-like GTPase superfamily. Era GTPase family. As to quaternary structure, monomer.

Its subcellular location is the cytoplasm. It localises to the cell membrane. Functionally, an essential GTPase that binds both GDP and GTP, with rapid nucleotide exchange. Plays a role in 16S rRNA processing and 30S ribosomal subunit biogenesis and possibly also in cell cycle regulation and energy metabolism. This is GTPase Era from Clostridium perfringens (strain 13 / Type A).